A 253-amino-acid chain; its full sequence is Small ribosomal subunit protein uS2 (253 aa).

The protein belongs to the universal ribosomal protein uS2 family.

This chain is Small ribosomal subunit protein uS2, found in Cereibacter sphaeroides (strain ATCC 17023 / DSM 158 / JCM 6121 / CCUG 31486 / LMG 2827 / NBRC 12203 / NCIMB 8253 / ATH 2.4.1.) (Rhodobacter sphaeroides).